A 397-amino-acid polypeptide reads, in one-letter code: NADH-quinone oxidoreductase subunit H (397 aa).

9 helical membrane-spanning segments follow: residues 7 to 27 (ALLI…TAFA), 78 to 98 (LVYT…FGGI), 120 to 140 (ILAL…GGWA), 164 to 184 (MGLS…LDIV), 195 to 215 (WLIL…FAEV), 247 to 267 (MAEY…FFGG), 283 to 303 (SWPL…FIWV), 322 to 342 (LTLP…AFVP), and 353 to 373 (WLLG…SDAV).

This sequence belongs to the complex I subunit 1 family. As to quaternary structure, NDH-1 is composed of 15 different subunits. Subunits NuoA, H, J, K, L, M, N constitute the membrane sector of the complex.

The protein localises to the cell membrane. The catalysed reaction is a quinone + NADH + 5 H(+)(in) = a quinol + NAD(+) + 4 H(+)(out). In terms of biological role, NDH-1 shuttles electrons from NADH, via FMN and iron-sulfur (Fe-S) centers, to quinones in the respiratory chain. The immediate electron acceptor for the enzyme in this species is believed to be ubiquinone. Couples the redox reaction to proton translocation (for every two electrons transferred, four hydrogen ions are translocated across the cytoplasmic membrane), and thus conserves the redox energy in a proton gradient. This subunit may bind ubiquinone. The polypeptide is NADH-quinone oxidoreductase subunit H (Deinococcus radiodurans (strain ATCC 13939 / DSM 20539 / JCM 16871 / CCUG 27074 / LMG 4051 / NBRC 15346 / NCIMB 9279 / VKM B-1422 / R1)).